A 454-amino-acid chain; its full sequence is MSDNDTIVAQATPPGRGGVGILRISGFKAREVAETVLGKLPKPRYADYLPFKDADGSVLDQGIALWFPGPNSFTGEDVLELQGHGGPVILDLLLKRILTIPGLRIARPGEFSERAFLNDKLDLAQAEAIADLIDASSEQAARSALNSLQGAFSARVNHLVEALTHLRIYVEAAIDFPDEEIDFLSDGKIEAQLNDVMADLDAVRAEARQGSLLREGMKVVIAGRPNAGKSSLLNALAGREAAIVTDIAGTTRDVLREHIHIDGMPLHIIDTAGLREASDEVERIGIERAWQEIEQADRVLFMVDGTTTDAVDPAEIWPEFIARLPAKLPITVVRNKADITGETLGMSEVNGHALIRLSARTGEGVDVLRNHLKQSMGFDTNMEGGFLARRRHLQALEQAAEHLQQGKAQLLGAWAGELLAEELRLAQQNLSEITGEFTSDDLLGRIFSSFCIGK.

Residues Arg-23, Glu-80, and Lys-120 each contribute to the (6S)-5-formyl-5,6,7,8-tetrahydrofolate site. Positions 216–377 constitute a TrmE-type G domain; sequence GMKVVIAGRP…LRNHLKQSMG (162 aa). Asn-226 serves as a coordination point for K(+). GTP contacts are provided by residues 226-231, 245-251, 270-273, 335-338, and 358-360; these read NAGKSS, TDIAGTT, DTAG, NKAD, and SAR. Mg(2+) is bound at residue Ser-230. K(+) contacts are provided by Thr-245, Ile-247, and Thr-250. Thr-251 lines the Mg(2+) pocket. Residue Lys-454 coordinates (6S)-5-formyl-5,6,7,8-tetrahydrofolate.

It belongs to the TRAFAC class TrmE-Era-EngA-EngB-Septin-like GTPase superfamily. TrmE GTPase family. In terms of assembly, homodimer. Heterotetramer of two MnmE and two MnmG subunits. K(+) is required as a cofactor.

The protein localises to the cytoplasm. Functionally, exhibits a very high intrinsic GTPase hydrolysis rate. Involved in the addition of a carboxymethylaminomethyl (cmnm) group at the wobble position (U34) of certain tRNAs, forming tRNA-cmnm(5)s(2)U34. The polypeptide is tRNA modification GTPase MnmE (Shigella flexneri serotype 5b (strain 8401)).